We begin with the raw amino-acid sequence, 319 residues long: Acetyl-coenzyme A carboxylase carboxyl transferase subunit alpha (319 aa).

Residues 38-292 (ALDKKAADLL…GKAIASMLAG (255 aa)) form the CoA carboxyltransferase C-terminal domain.

This sequence belongs to the AccA family. In terms of assembly, acetyl-CoA carboxylase is a heterohexamer composed of biotin carboxyl carrier protein (AccB), biotin carboxylase (AccC) and two subunits each of ACCase subunit alpha (AccA) and ACCase subunit beta (AccD).

The protein resides in the cytoplasm. The catalysed reaction is N(6)-carboxybiotinyl-L-lysyl-[protein] + acetyl-CoA = N(6)-biotinyl-L-lysyl-[protein] + malonyl-CoA. The protein operates within lipid metabolism; malonyl-CoA biosynthesis; malonyl-CoA from acetyl-CoA: step 1/1. Component of the acetyl coenzyme A carboxylase (ACC) complex. First, biotin carboxylase catalyzes the carboxylation of biotin on its carrier protein (BCCP) and then the CO(2) group is transferred by the carboxyltransferase to acetyl-CoA to form malonyl-CoA. The polypeptide is Acetyl-coenzyme A carboxylase carboxyl transferase subunit alpha (Jannaschia sp. (strain CCS1)).